Here is a 360-residue protein sequence, read N- to C-terminus: MAKLPVEKMRELERRFGEIEARMSAGPSADVYVKLASEYSELQPVVSKIRAYEKATAELADIGAMLADRATDKDMRDLAELEKPEIEERVEALEQEIQILLLPKDAADEKSAILEIRAGTGGSEAALFAGDLFRMYERYAAGKGWRVEVLSASEGEAGGYKEIIATVSGRGVFSRLKFESGVHRVQRVPETEAGGRIHTSAATVAVLPEAEDIDIDIRSEDIRVDTMRSSGAGGQHVNTTDSAVRITHLPTGLVVTSSEKSQHQNRAKAMQVLRSRLYDMERQRADSERSADRRNQVGSGDRSERIRTYNFPQGRLTDHRINLTIYKLDRVMEGEIDEIVDALLADYQASQLALLGEKQN.

The residue at position 235 (Q235) is an N5-methylglutamine. Positions 281 to 307 are enriched in basic and acidic residues; sequence ERQRADSERSADRRNQVGSGDRSERIR. Residues 281–310 are disordered; the sequence is ERQRADSERSADRRNQVGSGDRSERIRTYN.

It belongs to the prokaryotic/mitochondrial release factor family. In terms of processing, methylated by PrmC. Methylation increases the termination efficiency of RF1.

The protein resides in the cytoplasm. Functionally, peptide chain release factor 1 directs the termination of translation in response to the peptide chain termination codons UAG and UAA. The protein is Peptide chain release factor 1 of Sinorhizobium medicae (strain WSM419) (Ensifer medicae).